A 113-amino-acid polypeptide reads, in one-letter code: MNTVRVTFLLVFVLAVSLGRADKDENRMEMQEKTEQGKSYLDFAENLLLQKLEELEAKLLEEDSEESRNSRQKRCIGEGVPCDENDPRCCSGLVCLKPTLHGIWYKSYYCYKK.

The signal sequence occupies residues 1–21 (MNTVRVTFLLVFVLAVSLGRA). Positions 22–74 (DKDENRMEMQEKTEQGKSYLDFAENLLLQKLEELEAKLLEEDSEESRNSRQKR) are excised as a propeptide. Disulfide bonds link Cys-75–Cys-90, Cys-82–Cys-95, and Cys-89–Cys-110.

This sequence belongs to the neurotoxin 14 (magi-1) family. 01 (HNTX-16) subfamily. Expressed by the venom gland.

Its subcellular location is the secreted. Its function is as follows. Probable ion channel inhibitor. This Cyriopagopus hainanus (Chinese bird spider) protein is U11-theraphotoxin-Hhn1a.